A 500-amino-acid chain; its full sequence is NAD(P)H-quinone oxidoreductase chain 4, chloroplastic (500 aa).

15 helical membrane-spanning segments follow: residues 4-24, 31-51, 87-107, 111-131, 134-154, 167-187, 207-227, 242-262, 274-294, 305-325, 330-350, 358-378, 386-406, 416-436, and 462-482; these read LPWL…IPLF, IIRW…TYTF, IGPI…AWPV, PRLF…LFAS, ILLF…LISM, FILY…SMGL, VVLE…KLPI, HYST…YGLI, SLFS…AALT, IAYS…SMAD, GAIL…FLAG, TLFL…STMF, LALP…GIIT, IVIA…LLSM, and IFIS…PDLV.

Belongs to the complex I subunit 4 family.

Its subcellular location is the plastid. It is found in the chloroplast thylakoid membrane. It catalyses the reaction a plastoquinone + NADH + (n+1) H(+)(in) = a plastoquinol + NAD(+) + n H(+)(out). The enzyme catalyses a plastoquinone + NADPH + (n+1) H(+)(in) = a plastoquinol + NADP(+) + n H(+)(out). The protein is NAD(P)H-quinone oxidoreductase chain 4, chloroplastic of Cycas taitungensis (Prince sago).